The chain runs to 139 residues: D-ribose pyranase (139 aa).

Residue histidine 20 is the Proton donor of the active site. Residues aspartate 28, histidine 106, and 128 to 130 (YAN) each bind substrate.

The protein belongs to the RbsD / FucU family. RbsD subfamily. In terms of assembly, homodecamer.

It is found in the cytoplasm. The catalysed reaction is beta-D-ribopyranose = beta-D-ribofuranose. It participates in carbohydrate metabolism; D-ribose degradation; D-ribose 5-phosphate from beta-D-ribopyranose: step 1/2. Catalyzes the interconversion of beta-pyran and beta-furan forms of D-ribose. The chain is D-ribose pyranase from Vibrio parahaemolyticus serotype O3:K6 (strain RIMD 2210633).